A 906-amino-acid chain; its full sequence is MSHQVKGLKEEARGGVKGRVKSGSPHTGDRLGRRSSSKRALKAEGTPGRRGAQRSQKERAGGSPSPGSPRRKQTGRRRHREELGEQERGEAERTCEGRRKRDERASFQERTAAPKREKEIPRREEKSKRQKKPRSSSLASSASGGESLSEEELAQILEQVEEKKKLIATMRSKPWPMAKKLTELREAQEFVEKYEGALGKGKGKQLYAYKMLMAKKWVKFKRDFDNFKTQCIPWEMKIKDIESHFGSSVASYFIFLRWMYGVNLVLFGLIFGLVIIPEVLMGMPYGSIPRKTVPRAEEEKAMDFSVLWDFEGYIKYSALFYGYYNNQRTIGWLRYRLPMAYFMVGVSVFGYSLIIVIRSMASNTQGSTGEGESDNFTFSFKMFTSWDYLIGNSETADNKYASITTSFKESIVDEQESNKEENIHLTRFLRVLANFLIICCLCGSGYLIYFVVKRSQQFSKMQNVSWYERNEVEIVMSLLGMFCPPLFETIAALENYHPRTGLKWQLGRIFALFLGNLYTFLLALMDDVHLKLANEETIKNITHWTLFNYYNSSGWNESVPRPPLHPADVPRGSCWETAVGIEFMRLTVSDMLVTYITILLGDFLRACFVRFMNYCWCWDLEAGFPSYAEFDISGNVLGLIFNQGMIWMGSFYAPGLVGINVLRLLTSMYFQCWAVMSSNVPHERVFKASRSNNFYMGLLLLVLFLSLLPVAYTIMSLPPSFDCGPFSGKNRMYDVLQETIENDFPTFLGKIFAFLANPGLIIPAILLMFLAIYYLNSVSKSLSRANAQLRKKIQVLREVEKSHKSVKGKATARDSEDTPKSSSKNATQLQLTKEETTPPSASQSQAMDKKAQGPGTSNSASRTTLPASGHLPISRPPGIGPDSGHAPSQTHPWRSASGKSAQRPPH.

The tract at residues 1 to 150 (MSHQVKGLKE…SASGGESLSE (150 aa)) is disordered. Residues 1-263 (MSHQVKGLKE…IFLRWMYGVN (263 aa)) are Cytoplasmic-facing. Residues 69–79 (PRRKQTGRRRH) show a composition bias toward basic residues. Positions 80-127 (REELGEQERGEAERTCEGRRKRDERASFQERTAAPKREKEIPRREEKS) are enriched in basic and acidic residues. The segment covering 135 to 147 (SSSLASSASGGES) has biased composition (low complexity). Residues 264-284 (LVLFGLIFGLVIIPEVLMGMP) form a helical membrane-spanning segment. The Extracellular segment spans residues 285–336 (YGSIPRKTVPRAEEEKAMDFSVLWDFEGYIKYSALFYGYYNNQRTIGWLRYR). The helical transmembrane segment at 337 to 357 (LPMAYFMVGVSVFGYSLIIVI) threads the bilayer. The Cytoplasmic portion of the chain corresponds to 358-431 (RSMASNTQGS…NIHLTRFLRV (74 aa)). A helical transmembrane segment spans residues 432-452 (LANFLIICCLCGSGYLIYFVV). Over 453 to 508 (KRSQQFSKMQNVSWYERNEVEIVMSLLGMFCPPLFETIAALENYHPRTGLKWQLGR) the chain is Extracellular. The helical transmembrane segment at 509-529 (IFALFLGNLYTFLLALMDDVH) threads the bilayer. The Cytoplasmic portion of the chain corresponds to 530–693 (LKLANEETIK…RVFKASRSNN (164 aa)). The chain crosses the membrane as a helical span at residues 694–714 (FYMGLLLLVLFLSLLPVAYTI). Residues 715–750 (MSLPPSFDCGPFSGKNRMYDVLQETIENDFPTFLGK) are Extracellular-facing. A helical membrane pass occupies residues 751-771 (IFAFLANPGLIIPAILLMFLA). The Cytoplasmic segment spans residues 772–906 (IYYLNSVSKS…SGKSAQRPPH (135 aa)). The tract at residues 800–906 (EKSHKSVKGK…SGKSAQRPPH (107 aa)) is disordered. Polar residues-rich tracts occupy residues 820 to 846 (KSSS…QSQA), 854 to 866 (PGTS…TTLP), and 886 to 900 (APSQ…SGKS).

This sequence belongs to the TMC family. As to quaternary structure, forms the MET channel composed of TMC dimer (TMC1 or TMC2), TMIE, TOMT, CIB (CIB2 or CIB3), LHFPL5 and PDH15. The interaction of TMC1 and TMC2 with TOMT is required for the transportation of TMC1/2 into the stereocilia of hair cells. Interacts (via N-terminus) with both isoforms CD1 and CD3 of PCDH15. Can form a heterodimer with TMC1, TMC5 or TMC7. Detected in fetal cochlea.

Its subcellular location is the cell membrane. The catalysed reaction is Ca(2+)(in) = Ca(2+)(out). Functionally, pore-forming subunit of the mechanotransducer (MET) non-selective cation channel complex located at the tips of stereocilia of cochlear hair cells and that mediates sensory transduction in the auditory system. The MET complex is composed of two dimeric pore-forming ion-conducting transmembrane TMC (TMC1 or TMC2) subunits, and aided by several auxiliary proteins including LHFPL5, TMIE, CIB2/3 and TOMT, and the tip-link PCDH15. MET channel is activated by tension in the tip-link extending from the side wall of one stereocilium to the tip of the adjacent shorter stereocilium, where the channel is located. TMC2 MET channel is highly permeable to calcium and likely transports monovalent cations. Also involved in vestibular hair cell transduction current of the mammalian inner ear. The sequence is that of Transmembrane channel-like protein 2 from Homo sapiens (Human).